We begin with the raw amino-acid sequence, 472 residues long: Putative ankyrin repeat protein L675 (472 aa).

ANK repeat units lie at residues 125–156 (YKANRFYLGEKFDLGDVEVVKFFIKKGTDIHL), 187–216 (DNFKVLAKICRDGNLELLRLLELNGFNETI), 265–295 (YKTKVLLMAIANNHAELVQYLLTQNPSDKDI), 297–323 (HAMLYAVTTANASLLDYTLKNGGNIHY), 325–351 (NDQALILAVRFNHISMVRKLICLGMDS), 352–381 (NNVFALTMAAENNHQDIVQHLINRGADVNA), 382–411 (NNRSALIAAVKNGHLKIVQMFVNNGADIKI), and 413–440 (DTVIKTACKNGHNNIVKYLLGKGVSCDD).

The chain is Putative ankyrin repeat protein L675 from Acanthamoeba polyphaga (Amoeba).